We begin with the raw amino-acid sequence, 49 residues long: Large ribosomal subunit protein eL40 (49 aa).

Belongs to the eukaryotic ribosomal protein eL40 family.

The protein is Large ribosomal subunit protein eL40 of Methanococcoides burtonii (strain DSM 6242 / NBRC 107633 / OCM 468 / ACE-M).